Here is a 583-residue protein sequence, read N- to C-terminus: MAASEVQGLPVDPREAGVRGVRGGIGHTDHEGHLGSFQLLATINKAAMNIVEHVSFLPVGTSSGYIAASSGITMSNFLRNRQTDFQSGCTSLQSHQQWRSVPLSPHPHQHLLSPEFLILAILTGVRWNLRIALICISLMIKDAEHFFRCFSAIWYSSDSKDCILEPLSLPESPGGTTALEGSPSVPCIFCEEHFPMAEQDKLLKHMIIEHKIVIADVKLVADFRRYILYWRKRFTEQPITDFCSVIRINSTAPFEEQDNYYLLCDALPEDRILREELQKHKLKEVLDQQQRERNDTSFHGVCMFCSEEFRGNRSVLLNHMAREHAFNIGLPDNIVNCAEFLCTLQKKLDNLQCLYCEKTFRDKNTLKDHMRKKQHRRINPKNREYDRFYVINYLELGKSWEEVQSEDDRELLDLQEDDWSDWQEYPVSAVCLFCEKQEETIDKLYVHMKDTHEFDLLRIKSELGLNFYQQVKLVNFIRRQVHQCKCYSCHVKFKSKADLRTHMEDTKHTSLLPDRKTWDQLEYYFPTYENDTLLCTLSDSESDLTAQEQTENVPVISEDTSRLCALKQSSVLNQLLLQGCLEN.

2 consecutive C2H2-type zinc fingers follow at residues 351-375 (LQCL…KKQH) and 482-508 (HQCK…DTKH).

It belongs to the ZNF277 family. In terms of assembly, interacts (via zinc-finger domains) with RPS2/40S ribosomal protein S2, perhaps as nascent RPS2 is synthesized during translation; the interaction is direct; the interaction is extra-ribosomal. Interaction with RPS2 competes with the binding of RPS2 to protein arginine methyltransferase PRMT3. Interacts with Polycomb group (PcG) complex protein BMI1. May be part of a complex including at least ZNF277, BMI1 and RNF2/RING2.

The protein localises to the nucleus. Its subcellular location is the cytoplasm. It is found in the nucleolus. The protein resides in the chromosome. Probable transcription factor. Involved in modulation of cellular senescence; represses transcription of the tumor suppressor gene INK4A/ARF, perhaps acting via the Polycomb group (PcG) complex PRC1. The chain is Zinc finger protein 277 from Mus musculus (Mouse).